Consider the following 538-residue polypeptide: Ribulokinase 1 (538 aa).

This sequence belongs to the ribulokinase family.

It carries out the reaction D-ribulose + ATP = D-ribulose 5-phosphate + ADP + H(+). It catalyses the reaction L-ribulose + ATP = L-ribulose 5-phosphate + ADP + H(+). It functions in the pathway carbohydrate degradation; L-arabinose degradation via L-ribulose; D-xylulose 5-phosphate from L-arabinose (bacterial route): step 2/3. This chain is Ribulokinase 1, found in Staphylococcus saprophyticus subsp. saprophyticus (strain ATCC 15305 / DSM 20229 / NCIMB 8711 / NCTC 7292 / S-41).